The following is a 125-amino-acid chain: Acidic phospholipase A2 5 (125 aa).

A signal peptide is located at residue Ser1. The propeptide occupies 2-7 (NRPMPL). 8 disulfides stabilise this stretch: Cys18–Cys77, Cys33–Cys124, Cys35–Cys50, Cys37–Cys54, Cys49–Cys105, Cys56–Cys98, Cys66–Cys91, and Cys84–Cys96. Phe28 serves as a coordination point for N-acetyl-beta-D-glucosamine. Asp30 serves as a coordination point for Zn(2+). Residues Tyr34 and Gly36 each coordinate Ca(2+). N-acetyl-beta-D-glucosamine-binding residues include His53 and Lys69. His53 is a catalytic residue. Glu76 is a binding site for Zn(2+). Asp99 is a catalytic residue. Asn117 provides a ligand contact to Zn(2+).

Heterodimer formed between isoform 5 and isoform 6 in presence of zinc ion and monomer in absence of zinc ion. The cofactor is Ca(2+). Expressed by the venom gland.

It is found in the secreted. It catalyses the reaction a 1,2-diacyl-sn-glycero-3-phosphocholine + H2O = a 1-acyl-sn-glycero-3-phosphocholine + a fatty acid + H(+). PLA2 catalyzes the calcium-dependent hydrolysis of the 2-acyl groups in 3-sn-phosphoglycerides. This is Acidic phospholipase A2 5 from Naja sagittifera (Andaman cobra).